Reading from the N-terminus, the 149-residue chain is MQVNIFCIQKSDEFKTWSEKYSKLISKYATLKEINVFNKKIALAQNLNAIEAKKSYEEAFMPYKKGYCIALDEKGKDLTSIEFAKLIQDKNELSFFIGGAYGLREEFNQSLDFRLSLSKLTLAHQFVKTLLLEQIYRAFCINNNHPYHK.

S-adenosyl-L-methionine is bound by residues Leu-71, Gly-98, and 117 to 122; that span reads LSKLTL.

This sequence belongs to the RNA methyltransferase RlmH family. As to quaternary structure, homodimer.

Its subcellular location is the cytoplasm. The enzyme catalyses pseudouridine(1915) in 23S rRNA + S-adenosyl-L-methionine = N(3)-methylpseudouridine(1915) in 23S rRNA + S-adenosyl-L-homocysteine + H(+). Functionally, specifically methylates the pseudouridine at position 1915 (m3Psi1915) in 23S rRNA. This Campylobacter jejuni subsp. jejuni serotype O:6 (strain 81116 / NCTC 11828) protein is Ribosomal RNA large subunit methyltransferase H.